A 592-amino-acid chain; its full sequence is Aspartate--tRNA(Asp/Asn) ligase (592 aa).

An L-aspartate-binding site is contributed by glutamate 182. Residues 206–209 are aspartate; it reads QIFK. An L-aspartate-binding site is contributed by arginine 228. ATP-binding positions include 228 to 230 and glutamine 237; that span reads RDE. Histidine 455 provides a ligand contact to L-aspartate. Glutamate 489 provides a ligand contact to ATP. Position 496 (arginine 496) interacts with L-aspartate. 541-544 provides a ligand contact to ATP; the sequence is GLDR.

This sequence belongs to the class-II aminoacyl-tRNA synthetase family. Type 1 subfamily. As to quaternary structure, homodimer.

The protein localises to the cytoplasm. It catalyses the reaction tRNA(Asx) + L-aspartate + ATP = L-aspartyl-tRNA(Asx) + AMP + diphosphate. In terms of biological role, aspartyl-tRNA synthetase with relaxed tRNA specificity since it is able to aspartylate not only its cognate tRNA(Asp) but also tRNA(Asn). Reaction proceeds in two steps: L-aspartate is first activated by ATP to form Asp-AMP and then transferred to the acceptor end of tRNA(Asp/Asn). The sequence is that of Aspartate--tRNA(Asp/Asn) ligase from Thermoanaerobacter sp. (strain X514).